The primary structure comprises 186 residues: MEIKELIAKATANMEKAVEYLDEQLSHVRAGKASPKLLDGIMVMYYGNATPLTQVASINTPDAKTIVVTPWERSLIKDIEKAIMDSPLGITPENNGELIRLGLPPLTEERRRQLVKQTKGDAEDAKVSVRNARRDAIDAIKKSVKTDGTPEDVAKDAEAEMQKVHDRYIKKIDELFAEKEKEIMTV.

The protein belongs to the RRF family.

It localises to the cytoplasm. Its function is as follows. Responsible for the release of ribosomes from messenger RNA at the termination of protein biosynthesis. May increase the efficiency of translation by recycling ribosomes from one round of translation to another. This chain is Ribosome-recycling factor, found in Porphyromonas gingivalis (strain ATCC BAA-308 / W83).